Consider the following 102-residue polypeptide: Acid shock protein (102 aa).

The signal sequence occupies residues 1 to 21 (MKKVLALVVAAAMGLSSAAFA). Positions 21–41 (AAETTTTPAPTATTTKAAPAK) are enriched in low complexity. A disordered region spans residues 21 to 102 (AAETTTTPAP…PAKPAAQPAA (82 aa)). The propeptide occupies 22–58 (AETTTTPAPTATTTKAAPAKTTHHKKQHKAAPAQKAQ). Residues 80–90 (AAKKHAKKHSH) show a composition bias toward basic residues. Residues 91–102 (QQPAKPAAQPAA) are compositionally biased toward low complexity.

Belongs to the Asr family. In terms of processing, proteolytic processing gives rise to the active protein.

The protein localises to the periplasm. Functionally, required for growth and/or survival at acidic conditions. This Escherichia coli (strain K12 / MC4100 / BW2952) protein is Acid shock protein.